Here is a 94-residue protein sequence, read N- to C-terminus: Exodeoxyribonuclease 7 small subunit (94 aa).

Positions 1-21 (MPRAPNDAPSASATPSATPAS) are disordered.

The protein belongs to the XseB family. In terms of assembly, heterooligomer composed of large and small subunits.

The protein resides in the cytoplasm. It carries out the reaction Exonucleolytic cleavage in either 5'- to 3'- or 3'- to 5'-direction to yield nucleoside 5'-phosphates.. Its function is as follows. Bidirectionally degrades single-stranded DNA into large acid-insoluble oligonucleotides, which are then degraded further into small acid-soluble oligonucleotides. In Ralstonia pickettii (strain 12J), this protein is Exodeoxyribonuclease 7 small subunit.